Consider the following 373-residue polypeptide: Peptide chain release factor 1-like, mitochondrial (373 aa).

The transit peptide at 1–25 directs the protein to the mitochondrion; the sequence is MRSGFLSGARRLWARRAFSRTPPPS. A coiled-coil region spans residues 56–110; that stretch reads QLAAAARLLSEKERELRDTESLLHDENEDLKKLAESEIALCQKQITELKHQIISL. The interval 229–293 is GGQ domain; that stretch reads PKDLRIDTKR…LRARLYSMHL (65 aa). Residues 243 to 245 carry the GGQ motif; it reads GGQ. The residue at position 245 (Gln245) is an N5-methylglutamine.

It belongs to the prokaryotic/mitochondrial release factor family. In terms of processing, methylation of glutamine in the GGQ triplet by HEMK1 is conserved from bacteria to mammals.

It localises to the mitochondrion. Mitochondrial peptide chain release factor that directs the termination of translation in response to the peptide chain termination codons UAA and UAG. This is Peptide chain release factor 1-like, mitochondrial (Mtrf1l) from Mus musculus (Mouse).